We begin with the raw amino-acid sequence, 226 residues long: ATP synthase F(0) complex subunit a (226 aa).

A run of 6 helical transmembrane segments spans residues 6-26, 68-88, 97-117, 138-158, 164-184, and 189-209; these read FASF…IVLF, WALM…LGLL, QLSM…ITGF, IPML…ALAV, ITAG…LMSI, and ALIT…VAMI.

Belongs to the ATPase A chain family. Component of the ATP synthase complex composed at least of ATP5F1A/subunit alpha, ATP5F1B/subunit beta, ATP5MC1/subunit c (homooctomer), MT-ATP6/subunit a, MT-ATP8/subunit 8, ATP5ME/subunit e, ATP5MF/subunit f, ATP5MG/subunit g, ATP5MK/subunit k, ATP5MJ/subunit j, ATP5F1C/subunit gamma, ATP5F1D/subunit delta, ATP5F1E/subunit epsilon, ATP5PF/subunit F6, ATP5PB/subunit b, ATP5PD/subunit d, ATP5PO/subunit OSCP. ATP synthase complex consists of a soluble F(1) head domain (subunits alpha(3) and beta(3)) - the catalytic core - and a membrane F(0) domain - the membrane proton channel (subunits c, a, 8, e, f, g, k and j). These two domains are linked by a central stalk (subunits gamma, delta, and epsilon) rotating inside the F1 region and a stationary peripheral stalk (subunits F6, b, d, and OSCP). Interacts with DNAJC30; interaction is direct.

The protein localises to the mitochondrion inner membrane. The enzyme catalyses H(+)(in) = H(+)(out). Subunit a, of the mitochondrial membrane ATP synthase complex (F(1)F(0) ATP synthase or Complex V) that produces ATP from ADP in the presence of a proton gradient across the membrane which is generated by electron transport complexes of the respiratory chain. ATP synthase complex consist of a soluble F(1) head domain - the catalytic core - and a membrane F(1) domain - the membrane proton channel. These two domains are linked by a central stalk rotating inside the F(1) region and a stationary peripheral stalk. During catalysis, ATP synthesis in the catalytic domain of F(1) is coupled via a rotary mechanism of the central stalk subunits to proton translocation. With the subunit c (ATP5MC1), forms the proton-conducting channel in the F(0) domain, that contains two crucial half-channels (inlet and outlet) that facilitate proton movement from the mitochondrial intermembrane space (IMS) into the matrix. Protons are taken up via the inlet half-channel and released through the outlet half-channel, following a Grotthuss mechanism. The protein is ATP synthase F(0) complex subunit a of Ovis aries (Sheep).